A 205-amino-acid chain; its full sequence is Large ribosomal subunit protein bL25 (205 aa).

The protein belongs to the bacterial ribosomal protein bL25 family. CTC subfamily. In terms of assembly, part of the 50S ribosomal subunit; part of the 5S rRNA/L5/L18/L25 subcomplex. Contacts the 5S rRNA. Binds to the 5S rRNA independently of L5 and L18.

This is one of the proteins that binds to the 5S RNA in the ribosome where it forms part of the central protuberance. The protein is Large ribosomal subunit protein bL25 of Bartonella bacilliformis (strain ATCC 35685 / KC583 / Herrer 020/F12,63).